A 471-amino-acid polypeptide reads, in one-letter code: MTARNLAEWQNFVQGCIDFRPNDGVYRIARDMFTEPELFELEMELIFEKVWIYACHESEIPNNNDFVTVQIGRQPMIVSRDGKGELHAMVNACEHRGATLTRVAKGNQSVFTCPFHAWCYKSDGRLVKVKAPGEYCEDFDKSSRGLKQGRIASYRGFVFVSLDTQATDSLEDFLGDAKVFLDLMVDQSPTGELEVLQGKSAYTFAGNWKLQNENGLDGYHVSTVHYNYVSTVQHRQQVNAAKGDELDTLDYSKLGAGDSETDDGWFSFKNGHSVLFSDMPNPTVRPGYNTVMPYLVEKFGEKRAEWAMHRLRNLNLYPSLFFMDQISSQLRIIRPVAWNKTEVISQCIGVKGESSEARRNRIRQFEDFFNVSGLGTPDDLVEFREQQKGFQGRIERWSDISRGYHQWTYGPTQNSQDLGIEPVITGREFTHEGLYVNQHGQWQRLILDGLNKKALKMHDVTFDNQSVMDEV.

The 109-residue stretch at 52–160 (IYACHESEIP…IASYRGFVFV (109 aa)) folds into the Rieske domain. The [2Fe-2S] cluster site is built by Cys-93, His-95, Cys-113, and His-116. Residues His-220, His-225, and Asp-379 each contribute to the Fe cation site.

Belongs to the bacterial ring-hydroxylating dioxygenase alpha subunit family. The anthranilate dioxygenase (AntDO) multicomponent enzyme system is composed of an oxygenase component and a NADH:acceptor reductase component (AntC). The oxygenase component is a heterohexamer of 3 large (AntA) and 3 small (AntB) subunits. Fe cation serves as cofactor. The cofactor is [2Fe-2S] cluster.

The enzyme catalyses anthranilate + NADH + O2 + 3 H(+) = catechol + NH4(+) + CO2 + NAD(+). It catalyses the reaction anthranilate + NADPH + O2 + 3 H(+) = catechol + NH4(+) + CO2 + NADP(+). It functions in the pathway aromatic compound metabolism; anthranilate degradation via hydroxylation; catechol from anthranilate: step 1/1. In terms of biological role, component of anthranilate dioxygenase multicomponent enzyme system which catalyzes the incorporation of both atoms of molecular oxygen into anthranilate to form catechol. In Acinetobacter baylyi (strain ATCC 33305 / BD413 / ADP1), this protein is Anthranilate 1,2-dioxygenase large subunit.